The chain runs to 502 residues: Acetyl-coenzyme A carboxylase carboxyl transferase subunit beta, chloroplastic (502 aa).

Residues 191 to 202 (GSDSESSSIRTS) show a composition bias toward low complexity. A disordered region spans residues 191–212 (GSDSESSSIRTSGNDSNFNVRE). A CoA carboxyltransferase N-terminal domain is found at 226–497 (LWVQCENCYE…NQNSSGARGS (272 aa)). Zn(2+) is bound by residues C230, C233, C249, and C252. A C4-type zinc finger spans residues 230–252 (CENCYELNYRSFFRSKMNICEQC).

It belongs to the AccD/PCCB family. In terms of assembly, acetyl-CoA carboxylase is a heterohexamer composed of biotin carboxyl carrier protein, biotin carboxylase and 2 subunits each of ACCase subunit alpha and ACCase plastid-coded subunit beta (accD). Zn(2+) is required as a cofactor.

It is found in the plastid. It localises to the chloroplast stroma. It carries out the reaction N(6)-carboxybiotinyl-L-lysyl-[protein] + acetyl-CoA = N(6)-biotinyl-L-lysyl-[protein] + malonyl-CoA. Its pathway is lipid metabolism; malonyl-CoA biosynthesis; malonyl-CoA from acetyl-CoA: step 1/1. Component of the acetyl coenzyme A carboxylase (ACC) complex. Biotin carboxylase (BC) catalyzes the carboxylation of biotin on its carrier protein (BCCP) and then the CO(2) group is transferred by the transcarboxylase to acetyl-CoA to form malonyl-CoA. In Chloranthus spicatus (Chulantree), this protein is Acetyl-coenzyme A carboxylase carboxyl transferase subunit beta, chloroplastic.